Here is a 337-residue protein sequence, read N- to C-terminus: Beta-glucosidase-like protein NCA3, mitochondrial (337 aa).

The segment covering 57–67 (ESAATTTTLSS) has biased composition (low complexity). Residues 57 to 84 (ESAATTTTLSSSEKDTSEQKRDGGFQDG) form a disordered region. The span at 68-80 (SEKDTSEQKRDGG) shows a compositional bias: basic and acidic residues.

It belongs to the SUN family.

The protein localises to the mitochondrion. In terms of biological role, involved in the mitochondrial expression of subunits 6 and 8 of the F0-F1 ATP synthase. This is Beta-glucosidase-like protein NCA3, mitochondrial (NCA3) from Saccharomyces cerevisiae (strain ATCC 204508 / S288c) (Baker's yeast).